The following is a 66-amino-acid chain: MAFLKKSLFLVLFLGLVSLSICEEEKRETEEEEHDQEEDDKSEEKRFLSLIPHIVSGVASLAIHFG.

The signal sequence occupies residues 1-22; sequence MAFLKKSLFLVLFLGLVSLSIC. The propeptide occupies 23–46; it reads EEEKRETEEEEHDQEEDDKSEEKR. Residues 25 to 44 are disordered; sequence EKRETEEEEHDQEEDDKSEE. Over residues 30–41 the composition is skewed to acidic residues; that stretch reads EEEEHDQEEDDK. Phe-65 carries the phenylalanine amide modification.

The protein belongs to the frog skin active peptide (FSAP) family. Phylloseptin subfamily. In terms of tissue distribution, expressed by the skin glands.

The protein localises to the secreted. The protein resides in the target cell membrane. Functionally, antimicrobial peptide with activity against the Gram-positive S.pyogenes (MIC=12.5 uM), but not against all other bacteria tested (both Gram-positive and Gram-negative). Does not show activity against fungi, and against Leishmania species. The chain is Phylloseptin-S3 from Phyllomedusa sauvagei (Sauvage's leaf frog).